The following is a 62-amino-acid chain: Photosystem II reaction center protein Z (62 aa).

2 helical membrane passes run 8 to 28 and 41 to 61; these read AVFALIITSSILLISVPVVFA and FSGTSLWIGLVFLVGILNSLI.

It belongs to the PsbZ family. PSII is composed of 1 copy each of membrane proteins PsbA, PsbB, PsbC, PsbD, PsbE, PsbF, PsbH, PsbI, PsbJ, PsbK, PsbL, PsbM, PsbT, PsbY, PsbZ, Psb30/Ycf12, at least 3 peripheral proteins of the oxygen-evolving complex and a large number of cofactors. It forms dimeric complexes.

Its subcellular location is the plastid. The protein resides in the chloroplast thylakoid membrane. Its function is as follows. May control the interaction of photosystem II (PSII) cores with the light-harvesting antenna, regulates electron flow through the 2 photosystem reaction centers. PSII is a light-driven water plastoquinone oxidoreductase, using light energy to abstract electrons from H(2)O, generating a proton gradient subsequently used for ATP formation. This chain is Photosystem II reaction center protein Z, found in Arabidopsis thaliana (Mouse-ear cress).